Here is a 119-residue protein sequence, read N- to C-terminus: Tubulin-specific chaperone A (119 aa).

It belongs to the TBCA family. In terms of assembly, supercomplex made of cofactors A to E. Cofactors A and D function by capturing and stabilizing tubulin in a quasi-native conformation. Cofactor E binds to the cofactor D-tubulin complex; interaction with cofactor C then causes the release of tubulin polypeptides that are committed to the native state.

It is found in the cytoplasm. Its subcellular location is the cytoskeleton. In terms of biological role, required for the maintenance of microtubule structures and cell polarity. Beta-tubulin-folding protein; may have a regulatory role in the tubulin-folding pathway. The polypeptide is Tubulin-specific chaperone A (alp31) (Schizosaccharomyces pombe (strain 972 / ATCC 24843) (Fission yeast)).